A 360-amino-acid polypeptide reads, in one-letter code: Photosystem II protein D1 (360 aa).

3 helical membrane passes run 32–49, 121–136, and 145–159; these read YLGWFGCLMVPTLVSATF, HFFIGVCSYLGREWEL, and WIFVAFSAPVAAASA. H121 is a chlorophyll a binding site. Residue Y129 coordinates pheophytin a. [CaMn4O5] cluster is bound by residues D173 and E192. Residues 200–221 traverse the membrane as a helical segment; the sequence is LHMFGVAAVFGGSLFSAMHGSL. Position 201 (H201) interacts with chlorophyll a. A quinone contacts are provided by residues H218 and 267–268; that span reads SF. H218 contributes to the Fe cation binding site. A Fe cation-binding site is contributed by H275. The chain crosses the membrane as a helical span at residues 277-291; sequence FLGAWPVVGIWLTAM. Residues H335, E336, D345, and A347 each coordinate [CaMn4O5] cluster. Residues 348-360 constitute a propeptide that is removed on maturation; the sequence is CANCLLSLWPMVG.

This sequence belongs to the reaction center PufL/M/PsbA/D family. As to quaternary structure, PSII is composed of 1 copy each of membrane proteins PsbA, PsbB, PsbC, PsbD, PsbE, PsbF, PsbH, PsbI, PsbJ, PsbK, PsbL, PsbM, PsbT, PsbX, PsbY, PsbZ, Psb30/Ycf12, at least 3 peripheral proteins of the oxygen-evolving complex and a large number of cofactors. It forms dimeric complexes. It depends on The D1/D2 heterodimer binds P680, chlorophylls that are the primary electron donor of PSII, and subsequent electron acceptors. It shares a non-heme iron and each subunit binds pheophytin, quinone, additional chlorophylls, carotenoids and lipids. D1 provides most of the ligands for the Mn4-Ca-O5 cluster of the oxygen-evolving complex (OEC). There is also a Cl(-1) ion associated with D1 and D2, which is required for oxygen evolution. The PSII complex binds additional chlorophylls, carotenoids and specific lipids. as a cofactor. Tyr-164 forms a radical intermediate that is referred to as redox-active TyrZ, YZ or Y-Z. Post-translationally, C-terminally processed by CtpA; processing is essential to allow assembly of the oxygen-evolving complex and thus photosynthetic growth.

The protein localises to the plastid. Its subcellular location is the chloroplast thylakoid membrane. It catalyses the reaction 2 a plastoquinone + 4 hnu + 2 H2O = 2 a plastoquinol + O2. Photosystem II (PSII) is a light-driven water:plastoquinone oxidoreductase that uses light energy to abstract electrons from H(2)O, generating O(2) and a proton gradient subsequently used for ATP formation. It consists of a core antenna complex that captures photons, and an electron transfer chain that converts photonic excitation into a charge separation. The D1/D2 (PsbA/PsbD) reaction center heterodimer binds P680, the primary electron donor of PSII as well as several subsequent electron acceptors. The polypeptide is Photosystem II protein D1 (Karenia mikimotoi (Red tide dinoflagellate)).